The sequence spans 486 residues: Solute carrier family 2, facilitated glucose transporter member 5 (486 aa).

An N-acetylmethionine modification is found at methionine 1. Residues 1 to 19 (MEQEGQEKKKEGRLTLVLA) are Cytoplasmic-facing. Residues 20-40 (LRTLIAAFGSSFQYAYNVSVC) traverse the membrane as a helical segment. Residue tyrosine 33 coordinates D-fructose. Residues 41 to 69 (NSPSELMTEFYNDTYYDRTGELIDEFPLT) are Extracellular-facing. N-linked (GlcNAc...) asparagine glycosylation is present at asparagine 52. Residues 70–92 (LLWSVTVSMFPSGGFAGSLLVGP) form a helical membrane-spanning segment. Topologically, residues 93-99 (LVNKFGR) are cytoplasmic. A helical transmembrane segment spans residues 100 to 120 (KGALLFNNIFSIVPAILMGCS). At 121-127 (KVARSFE) the chain is on the extracellular side. A helical transmembrane segment spans residues 128-150 (LIIISRLLVGICAGVSSNVVPMY). Residues 151–162 (LGELAPKNLRGA) lie on the Cytoplasmic side of the membrane. Residues 163 to 183 (LGVESQLFITLGILVAQIFGL) form a helical membrane-spanning segment. Glutamine 168 provides a ligand contact to D-fructose. The Extracellular segment spans residues 184 to 192 (RSIRQQKGW). Residues 193–211 (PILLGLTGGPAAAACPPFF) traverse the membrane as a helical segment. At 212–274 (PESPRYLLIG…LCAMRGLAWQ (63 aa)) the chain is on the cytoplasmic side. The helical transmembrane segment at 275-294 (LISVVPLMWQQLSGVNAIYY) threads the bilayer. Residues glutamine 284 and 292–294 (IYY) contribute to the D-fructose site. Over 295–306 (YDQIYLSPLDTD) the chain is Extracellular. Residues 307-327 (TQYYTAATGAVNVLMTVCTVF) form a helical membrane-spanning segment. The Cytoplasmic portion of the chain corresponds to 328–334 (VVESWAR). The helical transmembrane segment at 335–355 (LLLLLGFSPLAPTCCVLTAAL) threads the bilayer. At 356 to 363 (ALQDTVSW) the chain is on the extracellular side. Residues 364 to 385 (MPYISIVCIIVYVIGHAIGPAI) form a helical membrane-spanning segment. Histidine 379 provides a ligand contact to D-fructose. At 386-402 (RSLYTEIFLQSGRPPTW) the chain is on the cytoplasmic side. Residues 403-421 (WGQVHWLSNFTVGLVFPLI) form a helical membrane-spanning segment. Residue 407–408 (HW) coordinates D-fructose. Topologically, residues 422–426 (QWAGL) are extracellular. Residues 427–447 (YSFIIFGVACLSTTVYTFLIV) traverse the membrane as a helical segment. At 448 to 486 (PETKGKSFIEIIRRFIRMNKVEVSPDREELKDFPPDVSE) the chain is on the cytoplasmic side.

Belongs to the major facilitator superfamily. Sugar transporter (TC 2.A.1.1) family. Glucose transporter subfamily. In terms of tissue distribution, detected in jejunum. Detected at the intestinal brush-border membrane (at protein level). Detected in duodenum, jejunum and kidney.

It localises to the apical cell membrane. Its subcellular location is the cell membrane. It is found in the sarcolemma. The catalysed reaction is D-fructose(out) = D-fructose(in). Its function is as follows. Functions as a fructose transporter that has only low activity with other monosaccharides. Can mediate the uptake of deoxyglucose, but with low efficiency. Essential for fructose uptake in the small intestine. Plays a role in the regulation of salt uptake and blood pressure in response to dietary fructose. Required for the development of high blood pressure in response to high dietary fructose intake. In Oryctolagus cuniculus (Rabbit), this protein is Solute carrier family 2, facilitated glucose transporter member 5.